The chain runs to 89 residues: Large ribosomal subunit protein bL27 (89 aa).

Belongs to the bacterial ribosomal protein bL27 family.

The polypeptide is Large ribosomal subunit protein bL27 (Bacteroides fragilis (strain ATCC 25285 / DSM 2151 / CCUG 4856 / JCM 11019 / LMG 10263 / NCTC 9343 / Onslow / VPI 2553 / EN-2)).